The following is a 123-amino-acid chain: Small ribosomal subunit protein uS12 (123 aa).

A disordered region spans residues 1 to 32; it reads MPTINQLIRKPREAQKARDKAPALQSSPQKRG. Over residues 10–21 the composition is skewed to basic and acidic residues; sequence KPREAQKARDKA. D89 bears the 3-methylthioaspartic acid mark.

The protein belongs to the universal ribosomal protein uS12 family. As to quaternary structure, part of the 30S ribosomal subunit. Contacts proteins S8 and S17. May interact with IF1 in the 30S initiation complex.

Functionally, with S4 and S5 plays an important role in translational accuracy. Its function is as follows. Interacts with and stabilizes bases of the 16S rRNA that are involved in tRNA selection in the A site and with the mRNA backbone. Located at the interface of the 30S and 50S subunits, it traverses the body of the 30S subunit contacting proteins on the other side and probably holding the rRNA structure together. The combined cluster of proteins S8, S12 and S17 appears to hold together the shoulder and platform of the 30S subunit. The chain is Small ribosomal subunit protein uS12 from Azorhizobium caulinodans (strain ATCC 43989 / DSM 5975 / JCM 20966 / LMG 6465 / NBRC 14845 / NCIMB 13405 / ORS 571).